The primary structure comprises 424 residues: Histidinol dehydrogenase (424 aa).

Residues Tyr127, Gln188, and Asn211 each coordinate NAD(+). The substrate site is built by Ser234, Gln256, and His259. Positions 256 and 259 each coordinate Zn(2+). Active-site proton acceptor residues include Glu322 and His323. Positions 323, 356, 410, and 415 each coordinate substrate. Asp356 provides a ligand contact to Zn(2+). Zn(2+) is bound at residue His415.

This sequence belongs to the histidinol dehydrogenase family. Zn(2+) serves as cofactor.

It carries out the reaction L-histidinol + 2 NAD(+) + H2O = L-histidine + 2 NADH + 3 H(+). It participates in amino-acid biosynthesis; L-histidine biosynthesis; L-histidine from 5-phospho-alpha-D-ribose 1-diphosphate: step 9/9. Catalyzes the sequential NAD-dependent oxidations of L-histidinol to L-histidinaldehyde and then to L-histidine. This is Histidinol dehydrogenase from Methanococcus maripaludis (strain DSM 14266 / JCM 13030 / NBRC 101832 / S2 / LL).